The chain runs to 157 residues: ATP synthase subunit b (157 aa).

A helical transmembrane segment spans residues 11–31; sequence LIMFAMFTWFCMKFIWPPIVM.

The protein belongs to the ATPase B chain family. F-type ATPases have 2 components, F(1) - the catalytic core - and F(0) - the membrane proton channel. F(1) has five subunits: alpha(3), beta(3), gamma(1), delta(1), epsilon(1). F(0) has three main subunits: a(1), b(2) and c(10-14). The alpha and beta chains form an alternating ring which encloses part of the gamma chain. F(1) is attached to F(0) by a central stalk formed by the gamma and epsilon chains, while a peripheral stalk is formed by the delta and b chains.

It is found in the cell inner membrane. Functionally, f(1)F(0) ATP synthase produces ATP from ADP in the presence of a proton or sodium gradient. F-type ATPases consist of two structural domains, F(1) containing the extramembraneous catalytic core and F(0) containing the membrane proton channel, linked together by a central stalk and a peripheral stalk. During catalysis, ATP synthesis in the catalytic domain of F(1) is coupled via a rotary mechanism of the central stalk subunits to proton translocation. In terms of biological role, component of the F(0) channel, it forms part of the peripheral stalk, linking F(1) to F(0). This is ATP synthase subunit b from Vesicomyosocius okutanii subsp. Calyptogena okutanii (strain HA).